Here is a 371-residue protein sequence, read N- to C-terminus: Gustatory receptor-like 65a (371 aa).

At 1–13 (MREVNLLNRFTRQ) the chain is on the cytoplasmic side. Residues 14 to 34 (FLFLIVLVTQICGVATFVYNS) form a helical membrane-spanning segment. Residues 35–42 (KAQCFRQS) lie on the Extracellular side of the membrane. The helical transmembrane segment at 43–63 (GFLRFYSSLVLIFLALFLIVT) threads the bilayer. Residues 64 to 72 (TSKMFHNLQ) are Cytoplasmic-facing. A helical membrane pass occupies residues 73–93 (AVWPYVVGSVIILVVRIHGLL). The Extracellular segment spans residues 94–126 (ESAEIVELLNQMLRIMRQVNLMARHPNLFRLKH). The helical transmembrane segment at 127-147 (LLLLLLALQNLLRSLNTIVGI) threads the bilayer. The Cytoplasmic portion of the chain corresponds to 148–161 (SNHSAEAYDSFLNS). A helical transmembrane segment spans residues 162-182 (VILLIILAVLLSFLLQITINI). Over 183 to 251 (CLFVVLIATY…FHITVRIIRH (69 aa)) the chain is Extracellular. A helical transmembrane segment spans residues 252-272 (FRFHWLCAIIYGLLPFFSLTA). The Cytoplasmic segment spans residues 273–277 (KDQNG). A helical transmembrane segment spans residues 278–298 (FNFLIISALNIIFQWTIFAIL). Over 299 to 371 (SRESRITRSL…FVNRLEYLHI (73 aa)) the chain is Extracellular.

It localises to the cell membrane. The sequence is that of Gustatory receptor-like 65a from Drosophila melanogaster (Fruit fly).